We begin with the raw amino-acid sequence, 325 residues long: 33 kDa chaperonin (325 aa).

Intrachain disulfides connect Cys260–Cys262 and Cys293–Cys296.

It belongs to the HSP33 family. Post-translationally, under oxidizing conditions two disulfide bonds are formed involving the reactive cysteines. Under reducing conditions zinc is bound to the reactive cysteines and the protein is inactive.

Its subcellular location is the cytoplasm. Redox regulated molecular chaperone. Protects both thermally unfolding and oxidatively damaged proteins from irreversible aggregation. Plays an important role in the bacterial defense system toward oxidative stress. The protein is 33 kDa chaperonin of Aquifex aeolicus (strain VF5).